The chain runs to 199 residues: Small ribosomal subunit protein uS4 (199 aa).

Residues 106-170 (RRLQTIVFRK…SPVANELHPI (65 aa)) enclose the S4 RNA-binding domain. The interval 177-199 (PAQRSAEMKEGQGEASEEGETDE) is disordered.

Belongs to the universal ribosomal protein uS4 family. As to quaternary structure, part of the 30S ribosomal subunit. Contacts protein S5. The interaction surface between S4 and S5 is involved in control of translational fidelity.

One of the primary rRNA binding proteins, it binds directly to 16S rRNA where it nucleates assembly of the body of the 30S subunit. In terms of biological role, with S5 and S12 plays an important role in translational accuracy. The chain is Small ribosomal subunit protein uS4 from Thermoplasma acidophilum (strain ATCC 25905 / DSM 1728 / JCM 9062 / NBRC 15155 / AMRC-C165).